The primary structure comprises 299 residues: Probable lipid kinase YegS-like (299 aa).

The DAGKc domain occupies 2-133; it reads EKNPITLLIL…IDIAKVNDGH (132 aa). ATP contacts are provided by residues T40, 66-72, and T95; that span reads GDGTVNE. Positions 215, 218, and 220 each coordinate Mg(2+). The active-site Proton acceptor is the E271.

The protein belongs to the diacylglycerol/lipid kinase family. YegS lipid kinase subfamily. The cofactor is Mg(2+). Requires Ca(2+) as cofactor.

The protein resides in the cytoplasm. Probably phosphorylates lipids; the in vivo substrate is unknown. This Pectobacterium atrosepticum (strain SCRI 1043 / ATCC BAA-672) (Erwinia carotovora subsp. atroseptica) protein is Probable lipid kinase YegS-like.